The chain runs to 130 residues: Large ribosomal subunit protein bL20 (130 aa).

It belongs to the bacterial ribosomal protein bL20 family.

In terms of biological role, binds directly to 23S ribosomal RNA and is necessary for the in vitro assembly process of the 50S ribosomal subunit. It is not involved in the protein synthesizing functions of that subunit. This chain is Large ribosomal subunit protein bL20, found in Salinispora arenicola (strain CNS-205).